Here is a 668-residue protein sequence, read N- to C-terminus: Endoplasmic reticulum oxidoreductin-1 (668 aa).

The N-terminal stretch at 1-22 (MKPASRLFYLSLFALWSPEAQC) is a signal peptide. 4 disulfides stabilise this stretch: cysteine 79/cysteine 413, cysteine 89/cysteine 94, cysteine 150/cysteine 352, and cysteine 416/cysteine 419. Residues 116-142 (KLEGPRAKHPGKSVQKEEPKRPLQGKL) form a disordered region. Residues arginine 186, threonine 188, tryptophan 199, serine 282, and histidine 285 each coordinate FAD. 2 N-linked (GlcNAc...) asparagine glycosylation sites follow: asparagine 298 and asparagine 307. Position 314 (arginine 314) interacts with FAD. N-linked (GlcNAc...) asparagine glycosylation occurs at asparagine 406. Cysteine 416 functions as the Nucleophile in the catalytic mechanism. The active site involves cysteine 419. The N-linked (GlcNAc...) asparagine glycan is linked to asparagine 443. Disordered regions lie at residues 488 to 519 (VEES…DRAK) and 554 to 597 (GVTP…DPNF). A compositionally biased stretch (polar residues) spans 494–509 (GQQPQSHEQIEGSENS). Positions 570–581 (DNNDDDDDDDEF) are enriched in acidic residues.

Belongs to the EROs family. May function both as a monomer and a homodimer. Requires FAD as cofactor.

Its subcellular location is the endoplasmic reticulum membrane. Functionally, essential oxidoreductase that oxidizes proteins in the endoplasmic reticulum to produce disulfide bonds. Acts by oxidizing directly pdi1 isomerase through a direct disulfide exchange. Does not act as a direct oxidant of folding substrate, but relies on pdi1 to transfer oxidizing equivalent. Does not oxidize all pdi related proteins, suggesting that it can discriminate between pdi1 and related proteins. Its reoxidation probably involves electron transfer to molecular oxygen via FAD. Acts independently of glutathione. May be responsible for a significant proportion of reactive oxygen species (ROS) in the cell, thereby being a source of oxidative stress. The polypeptide is Endoplasmic reticulum oxidoreductin-1 (ero-1) (Neurospora crassa (strain ATCC 24698 / 74-OR23-1A / CBS 708.71 / DSM 1257 / FGSC 987)).